A 436-amino-acid polypeptide reads, in one-letter code: MSETHLSTQKFADFPLHKEVHQALNEAGFEFCTPIQALSLPILLEKKDIAGQAQTGTGKTLAFLVATFNHLLSTPIPAERQLNQPRAIIMAPTRELAIQIAKDANLLAKHTGLKVGIVYGGEGYEVQRKVLDKGVDILIGTTGRIIDYVRQGVINVSCIQAVVLDEADRMFDLGFIKDIRFLFRRMPDAKSRLNMLFSATLSMKVQELAYDHMNEPEKVEIAPNEKTSKNIKEEIFYPSMEEKMPLLLSLLEEDWPEKAIVFSNTKHSCEKVWSWLEGDGHRAGLLTGDVPQKKRLRILEQFTKGDIDILVATDVAARGLHISDVSHVYNYDLPDDCEDYVHRIGRTGRAGQKGVSVSFACEEYALNLPAIESYIQHSIPVTSYDSDALLDDIPPPVRIHRKPSTHTRNTRDRSSGRPQGGQRNGPRRHDKTRRHS.

A Q motif motif is present at residues 9 to 37; the sequence is QKFADFPLHKEVHQALNEAGFEFCTPIQA. In terms of domain architecture, Helicase ATP-binding spans 40–219; sequence LPILLEKKDI…YDHMNEPEKV (180 aa). Residue 53–60 participates in ATP binding; the sequence is AQTGTGKT. A DEAD box motif is present at residues 165-168; sequence DEAD. Positions 243–390 constitute a Helicase C-terminal domain; sequence KMPLLLSLLE…VTSYDSDALL (148 aa). Residues 392–436 are disordered; sequence DIPPPVRIHRKPSTHTRNTRDRSSGRPQGGQRNGPRRHDKTRRHS. Positions 425–436 are enriched in basic residues; sequence GPRRHDKTRRHS.

Belongs to the DEAD box helicase family. RhlB subfamily. In terms of assembly, component of the RNA degradosome, which is a multiprotein complex involved in RNA processing and mRNA degradation.

The protein localises to the cytoplasm. The enzyme catalyses ATP + H2O = ADP + phosphate + H(+). Its function is as follows. DEAD-box RNA helicase involved in RNA degradation. Has RNA-dependent ATPase activity and unwinds double-stranded RNA. This is ATP-dependent RNA helicase RhlB from Shewanella pealeana (strain ATCC 700345 / ANG-SQ1).